The primary structure comprises 340 residues: DNA-directed RNA polymerase subunit alpha (340 aa).

Residues 1–226 (MLIAQRPSLT…ELFGLARELN (226 aa)) are alpha N-terminal domain (alpha-NTD). The interval 243-340 (LAADLALPIE…DAGFVETEQY (98 aa)) is alpha C-terminal domain (alpha-CTD).

This sequence belongs to the RNA polymerase alpha chain family. As to quaternary structure, homodimer. The RNAP catalytic core consists of 2 alpha, 1 beta, 1 beta' and 1 omega subunit. When a sigma factor is associated with the core the holoenzyme is formed, which can initiate transcription.

It catalyses the reaction RNA(n) + a ribonucleoside 5'-triphosphate = RNA(n+1) + diphosphate. Its function is as follows. DNA-dependent RNA polymerase catalyzes the transcription of DNA into RNA using the four ribonucleoside triphosphates as substrates. In Streptomyces avermitilis (strain ATCC 31267 / DSM 46492 / JCM 5070 / NBRC 14893 / NCIMB 12804 / NRRL 8165 / MA-4680), this protein is DNA-directed RNA polymerase subunit alpha.